Consider the following 84-residue polypeptide: Putative membrane protein insertion efficiency factor (84 aa).

The protein belongs to the UPF0161 family.

The protein localises to the cell inner membrane. Functionally, could be involved in insertion of integral membrane proteins into the membrane. In Acidiphilium cryptum (strain JF-5), this protein is Putative membrane protein insertion efficiency factor.